Here is a 577-residue protein sequence, read N- to C-terminus: Arginine--tRNA ligase (577 aa).

Residues 123-133 carry the 'HIGH' region motif; it reads PNVAKEMHVGH.

It belongs to the class-I aminoacyl-tRNA synthetase family. Monomer.

The protein resides in the cytoplasm. It catalyses the reaction tRNA(Arg) + L-arginine + ATP = L-arginyl-tRNA(Arg) + AMP + diphosphate. This chain is Arginine--tRNA ligase, found in Cronobacter sakazakii (strain ATCC BAA-894) (Enterobacter sakazakii).